Here is a 107-residue protein sequence, read N- to C-terminus: DNA polymerase delta subunit 4 (107 aa).

Residues 1 to 16 carry the PCNA-interaction protein motif (PIP box) motif; that stretch reads MGRKRLITDSYPVVKR. The interval 1 to 35 is disordered; sequence MGRKRLITDSYPVVKRREGSAGHSKGELAPDLGEE. Positions 15–28 are enriched in basic and acidic residues; the sequence is KRREGSAGHSKGEL.

This sequence belongs to the DNA polymerase delta subunit 4 family. Component of the tetrameric DNA polymerase delta complex (Pol-delta4), which consists of POLD1/p125, POLD2/p50, POLD3/p66/p68 and POLD4/p12, with POLD1 bearing DNA polymerase and 3' to 5' proofreading exonuclease activities. Within this complex, directly interacts with POLD1 and POLD2. Directly interacts with PCNA, as do POLD1 and POLD3; this interaction stimulates Pol-delta4 polymerase activity. As POLD1 and POLD2, directly interacts with WRNIP1; this interaction stimulates DNA polymerase delta-mediated DNA synthesis, independently of the presence of PCNA, possibly by increasing initiation frequency. Upon genotoxic stress induced by DNA damaging agents or by replication stress, POLD4 is proteolytically degraded and Pol-delta4 is converted into a trimeric form of the complex (Pol-delta3) that has an increased proofreading activity. The DNA polymerase delta complex interacts with POLDIP2; this interaction is probably mediated through direct binding to POLD2. Post-translationally, ubiquitinated; undergoes 'Lys-48'-linked ubiquitination in response to UV irradiation, leading to proteasomal degradation. This modification is partly mediated by RNF8 and by the DCX(DTL) E3 ubiquitin ligase complex (also called CRL4(CDT2)). Efficient degradation requires the presence of PCNA and is required for the inhibition of fork progression after DNA damage.

The protein resides in the nucleus. Functionally, as a component of the tetrameric DNA polymerase delta 4 complex (Pol-delta4), plays a role in high fidelity genome replication and repair. Within this complex, increases the rate of DNA synthesis and decreases fidelity by regulating POLD1 polymerase and proofreading 3' to 5' exonuclease activity. Pol-delta4 participates in Okazaki fragment processing, through both the short flap pathway, as well as a nick translation system. Under conditions of DNA replication stress, required for the repair of broken replication forks through break-induced replication (BIR), a mechanism that may induce segmental genomic duplications of up to 200 kb. Involved in Pol-delta4 translesion synthesis (TLS) of templates carrying O6-methylguanine or abasic sites. Its degradation in response to DNA damage is required for the inhibition of fork progression and cell survival. This chain is DNA polymerase delta subunit 4 (POLD4), found in Bos taurus (Bovine).